The primary structure comprises 578 residues: Vacuolar protein 8 (578 aa).

Residue Gly-2 is the site of N-myristoyl glycine attachment. Residues Cys-4, Cys-5, and Cys-7 are each lipidated (S-palmitoyl cysteine). Phosphoserine occurs at positions 11 and 16. ARM repeat units lie at residues 37–75 (DKDQLDFYSGGPLKALTTLVYSDNLNLQRSAALAFAEIT), 76–114 (EKYVRQVSREVLEPILILLQSQDPQIQVAACAALGNLAV), 116–155 (NENKLLIVEMGGLEPLINQMMGDNVEVQCNAVGCITNLAT), 157–196 (DDNKHKIATSGALIPLTKLAKSKHIRVQRNATGALLNMTH), 198–237 (EENRKELVNAGAVPVLVSLLSSTDPDVQYYCTTALSNIAV), 239–280 (EANR…NLAS), 282–321 (TSYQLEIVRAGGLPHLVKLIQSDSIPLVLASVACIRNISI), 323–363 (PLNE…NLAA), and 407–446 (DVSKLDLLEANILDALIPMTFSQNQEVSGNAAAALANLCS). A Glycyl lysine isopeptide (Lys-Gly) (interchain with G-Cter in ubiquitin) cross-link involves residue Lys-77. Lys-515 participates in a covalent cross-link: Glycyl lysine isopeptide (Lys-Gly) (interchain with G-Cter in ubiquitin). The disordered stretch occupies residues 527-557 (SGIDVKNPGSNNNPSSNDNNSNNNDTGSEHQ). Low complexity predominate over residues 533 to 552 (NPGSNNNPSSNDNNSNNNDT).

The protein belongs to the beta-catenin family. As to quaternary structure, interacts with NVJ1. Forms heterotetramers of two VAC8 and two NVJ1 or two VAC8 and two ATG13. In terms of processing, palmitoylated on one or more of its N-terminal cysteine residues by PFA3, which is required for vacuole fusion.

It localises to the vacuole membrane. Functionally, functions in both vacuole inheritance and protein targeting from the cytoplasm to vacuole (cvt). Involved in the formation of nucleus-vacuole junctions (NVJs) during piecemeal microautophagy of the nucleus (PMN). NVJs are interorganelle interfaces mediated by NVJ1 in the nuclear envelope and VAC8 on the vacuole membrane. Together, NVJ1 and VAC8 form Velcro-like patches through which teardrop-like portions of the nucleus are pinched off into the vacuolar lumen and degraded by the PMN process. In Saccharomyces cerevisiae (strain ATCC 204508 / S288c) (Baker's yeast), this protein is Vacuolar protein 8 (VAC8).